The primary structure comprises 91 residues: Parbolysin P6 (91 aa).

3 cysteine pairs are disulfide-bonded: Cys16/Cys37, Cys22/Cys33, and Cys47/Cys60.

This sequence belongs to the worm cytolysin family. Localized within the skin and proboscis and are most readily isolated from body mucus secretions.

It is found in the secreted. Its function is as follows. Cytolysin that shows hemolytic activity (on bovine erythrocytes, HC(50)=5.75 mg/ml). This hemolytic activity is completely inhibited by small unilamelar vesicles composed of PC/PG, PC/PI and PC/PS in 1:1 molar ratios (with at least 100 mg/ml concentration). The protein is Parbolysin P6 of Parborlasia corrugatus (Antarctic nemertean worm).